Here is a 249-residue protein sequence, read N- to C-terminus: Putative TrmH family tRNA/rRNA methyltransferase (249 aa).

Residues G196, I216, and L225 each contribute to the S-adenosyl-L-methionine site.

The protein belongs to the class IV-like SAM-binding methyltransferase superfamily. RNA methyltransferase TrmH family.

In Staphylococcus epidermidis (strain ATCC 35984 / DSM 28319 / BCRC 17069 / CCUG 31568 / BM 3577 / RP62A), this protein is Putative TrmH family tRNA/rRNA methyltransferase.